The primary structure comprises 263 residues: Cytochrome c oxidase subunit 3 (263 aa).

The next 7 membrane-spanning stretches (helical) occupy residues 7-27, 44-64, 78-98, 120-140, 145-165, 191-211, and 241-261; these read ITVL…KAHL, FSVG…VYSI, GMLS…WGIL, LILT…CLQF, GMSL…ECFA, VTGL…IYFI, and ITIL…YFFY.

Belongs to the cytochrome c oxidase subunit 3 family. Component of the cytochrome c oxidase (complex IV, CIV), a multisubunit enzyme composed of a catalytic core of 3 subunits and several supernumerary subunits. The complex exists as a monomer or a dimer and forms supercomplexes (SCs) in the inner mitochondrial membrane with ubiquinol-cytochrome c oxidoreductase (cytochrome b-c1 complex, complex III, CIII).

Its subcellular location is the mitochondrion inner membrane. The catalysed reaction is 4 Fe(II)-[cytochrome c] + O2 + 8 H(+)(in) = 4 Fe(III)-[cytochrome c] + 2 H2O + 4 H(+)(out). Functionally, component of the cytochrome c oxidase, the last enzyme in the mitochondrial electron transport chain which drives oxidative phosphorylation. The respiratory chain contains 3 multisubunit complexes succinate dehydrogenase (complex II, CII), ubiquinol-cytochrome c oxidoreductase (cytochrome b-c1 complex, complex III, CIII) and cytochrome c oxidase (complex IV, CIV), that cooperate to transfer electrons derived from NADH and succinate to molecular oxygen, creating an electrochemical gradient over the inner membrane that drives transmembrane transport and the ATP synthase. Cytochrome c oxidase is the component of the respiratory chain that catalyzes the reduction of oxygen to water. Electrons originating from reduced cytochrome c in the intermembrane space (IMS) are transferred via the dinuclear copper A center (CU(A)) of subunit 2 and heme A of subunit 1 to the active site in subunit 1, a binuclear center (BNC) formed by heme A3 and copper B (CU(B)). The BNC reduces molecular oxygen to 2 water molecules using 4 electrons from cytochrome c in the IMS and 4 protons from the mitochondrial matrix. This is Cytochrome c oxidase subunit 3 (COIII) from Plasmodium vivax.